The chain runs to 274 residues: Large ribosomal subunit protein uL2cy (274 aa).

2 disordered regions span residues methionine 1–asparagine 25 and methionine 223–lysine 274. Polar residues predominate over residues lysine 7–asparagine 25.

This sequence belongs to the universal ribosomal protein uL2 family. As to quaternary structure, part of the 50S ribosomal subunit.

It localises to the plastid. The protein resides in the chloroplast. The sequence is that of Large ribosomal subunit protein uL2cy (rpl2-B) from Atropa belladonna (Belladonna).